The sequence spans 259 residues: Tryptophan synthase alpha chain (259 aa).

Residues Glu-35 and Asp-46 each act as proton acceptor in the active site.

The protein belongs to the TrpA family. Tetramer of two alpha and two beta chains.

The enzyme catalyses (1S,2R)-1-C-(indol-3-yl)glycerol 3-phosphate + L-serine = D-glyceraldehyde 3-phosphate + L-tryptophan + H2O. It participates in amino-acid biosynthesis; L-tryptophan biosynthesis; L-tryptophan from chorismate: step 5/5. The alpha subunit is responsible for the aldol cleavage of indoleglycerol phosphate to indole and glyceraldehyde 3-phosphate. The chain is Tryptophan synthase alpha chain from Methanococcus maripaludis (strain C5 / ATCC BAA-1333).